Consider the following 513-residue polypeptide: Membrane protein (513 aa).

4 repeat units span residues 9-11, 12-14, 15-17, and 18-20. Residues 9–20 are 4 X 3 AA tandem repeats of P-S-A; it reads PSAPSAPSAPSA. Helical transmembrane passes span 32–52, 56–76, 79–99, 126–146, 165–185, 208–228, 254–274, 309–329, 332–352, 360–380, 400–420, 422–442, 447–467, and 487–507; these read LTLHWGLFAAVAALLVVLAIP, GLTVAGQRMLAILAFAIVVWI, AVSYETSAIMITSLMAGLIGF, TALALVAAALFISAAMTVTGL, ILIGTIAVTIALSLVVPSATA, NIAAGIMITVAQATSIWNVGI, QWLIAGAPWAIAMSVVLYFLV, LAAVSLGLLLFWATEGKLHSF, ATVTFVGLVILMMPRIGVMDW, PWGTLIVFGVGISLGTALLST, GALLVFAILSAFLILIHLGFA, ATALTAALLPILIAVLQTLPG, VGMTMLLGFTVSFGFILPINA, and IGIPVTIIGYAMMLLFAATYW.

It belongs to the SLC13A/DASS transporter (TC 2.A.47) family. DIT1 subfamily.

The protein localises to the cell membrane. The chain is Membrane protein from Cupriavidus necator (strain ATCC 17699 / DSM 428 / KCTC 22496 / NCIMB 10442 / H16 / Stanier 337) (Ralstonia eutropha).